Here is a 246-residue protein sequence, read N- to C-terminus: Probable transcriptional regulatory protein Dshi_2762 (246 aa).

This sequence belongs to the TACO1 family.

The protein localises to the cytoplasm. The protein is Probable transcriptional regulatory protein Dshi_2762 of Dinoroseobacter shibae (strain DSM 16493 / NCIMB 14021 / DFL 12).